A 155-amino-acid polypeptide reads, in one-letter code: Ribosomal RNA large subunit methyltransferase H (155 aa).

S-adenosyl-L-methionine is bound by residues leucine 73, glycine 104, and 123–128; that span reads ISKMTF.

The protein belongs to the RNA methyltransferase RlmH family. As to quaternary structure, homodimer.

It is found in the cytoplasm. It carries out the reaction pseudouridine(1915) in 23S rRNA + S-adenosyl-L-methionine = N(3)-methylpseudouridine(1915) in 23S rRNA + S-adenosyl-L-homocysteine + H(+). Its function is as follows. Specifically methylates the pseudouridine at position 1915 (m3Psi1915) in 23S rRNA. In Francisella philomiragia subsp. philomiragia (strain ATCC 25017 / CCUG 19701 / FSC 153 / O#319-036), this protein is Ribosomal RNA large subunit methyltransferase H.